We begin with the raw amino-acid sequence, 199 residues long: NAD(P)H dehydrogenase (quinone) (199 aa).

The region spanning 4–190 (ILVLYYSTYG…DGARFQGRHV (187 aa)) is the Flavodoxin-like domain. FMN is bound by residues 10-15 (STYGHI) and 78-80 (TRF). NAD(+) is bound at residue Tyr-12. Trp-98 contributes to the substrate binding site. FMN is bound by residues 113–119 (STATQHG) and His-134.

Belongs to the WrbA family. It depends on FMN as a cofactor.

The catalysed reaction is a quinone + NADH + H(+) = a quinol + NAD(+). The enzyme catalyses a quinone + NADPH + H(+) = a quinol + NADP(+). This chain is NAD(P)H dehydrogenase (quinone), found in Rhizorhabdus wittichii (strain DSM 6014 / CCUG 31198 / JCM 15750 / NBRC 105917 / EY 4224 / RW1) (Sphingomonas wittichii).